The following is a 430-amino-acid chain: Tyrosine--tRNA ligase (430 aa).

L-tyrosine is bound at residue Y32. The 'HIGH' region signature appears at 37-46 (PTADSLHIGH). Positions 172 and 176 each coordinate L-tyrosine. The short motif at 232–236 (KFGKT) is the 'KMSKS' region element. K235 is an ATP binding site. Positions 362-429 (VKAVDLFVDN…GKKNYFLLIA (68 aa)) constitute an S4 RNA-binding domain.

The protein belongs to the class-I aminoacyl-tRNA synthetase family. TyrS type 1 subfamily. Homodimer.

It localises to the cytoplasm. The catalysed reaction is tRNA(Tyr) + L-tyrosine + ATP = L-tyrosyl-tRNA(Tyr) + AMP + diphosphate + H(+). Its function is as follows. Catalyzes the attachment of tyrosine to tRNA(Tyr) in a two-step reaction: tyrosine is first activated by ATP to form Tyr-AMP and then transferred to the acceptor end of tRNA(Tyr). This chain is Tyrosine--tRNA ligase, found in Bacteroides thetaiotaomicron (strain ATCC 29148 / DSM 2079 / JCM 5827 / CCUG 10774 / NCTC 10582 / VPI-5482 / E50).